Here is a 113-residue protein sequence, read N- to C-terminus: Histone H2B (113 aa).

Residues methionine 1 to lysine 21 form a disordered region. The segment covering lysine 7–lysine 21 has biased composition (basic residues). A Glycyl lysine isopeptide (Lys-Gly) (interchain with G-Cter in ubiquitin) cross-link involves residue lysine 109.

Belongs to the histone H2B family. In terms of assembly, the nucleosome is a histone octamer containing two molecules each of H2A, H2B, H3 and H4 assembled in one H3-H4 heterotetramer and two H2A-H2B heterodimers. The octamer wraps approximately 147 bp of DNA. Post-translationally, monoubiquitination of Lys-109 gives a specific tag for epigenetic transcriptional activation and is also prerequisite for histone H3 'Lys-4' and 'Lys-79' methylation.

It localises to the nucleus. It is found in the chromosome. Its function is as follows. Core component of nucleosome. Nucleosomes wrap and compact DNA into chromatin, limiting DNA accessibility to the cellular machineries which require DNA as a template. Histones thereby play a central role in transcription regulation, DNA repair, DNA replication and chromosomal stability. DNA accessibility is regulated via a complex set of post-translational modifications of histones, also called histone code, and nucleosome remodeling. This is Histone H2B (H2B1) from Euplotes crassus.